Reading from the N-terminus, the 364-residue chain is MMEKNKRVLLGMSGGTDSSVAAMLLLEAGYEVTGVTFRFYEFNGSTEYLEDARALAARLGIGHITYDARKVFQEQIIDYFIDEYMSGHTPVPCTLCNNQLKWPLLAKIADEMGIFYLATGHYVRKQWIDGNYYIAPAEDVDKDQSFFLWGLRQEILQRMLLPMGGMTKSEARAYAAGRGFEKVSKKKDSIGVCFCPLDYRSFLKKCLCDESGDKNRNIYRKVERGRFLDESGNFIAWHEGYPFYTIGQRRGLGIQLNRAVFVKEIHPETNEVVLASLKSLEKSEMWLKDWNIVDESRLLGCDDVIVKIRYRKQENHCSVTITPEGLLHIRLHEPLSAIAEGQAAAFYKDGLLLGGGIITMTDQR.

ATP-binding positions include 11-18 (GMSGGTDS) and Phe37. Residue Cys96 is the Nucleophile of the active site. Cysteines 96 and 193 form a disulfide. Residue Gly120 participates in ATP binding. An interaction with tRNA region spans residues 142–144 (KDQ). Residue Cys193 is the Cysteine persulfide intermediate of the active site. The interval 309 to 310 (RY) is interaction with tRNA.

Belongs to the MnmA/TRMU family.

The protein localises to the cytoplasm. The enzyme catalyses S-sulfanyl-L-cysteinyl-[protein] + uridine(34) in tRNA + AH2 + ATP = 2-thiouridine(34) in tRNA + L-cysteinyl-[protein] + A + AMP + diphosphate + H(+). Its function is as follows. Catalyzes the 2-thiolation of uridine at the wobble position (U34) of tRNA, leading to the formation of s(2)U34. The protein is tRNA-specific 2-thiouridylase MnmA 1 of Bacteroides fragilis (strain ATCC 25285 / DSM 2151 / CCUG 4856 / JCM 11019 / LMG 10263 / NCTC 9343 / Onslow / VPI 2553 / EN-2).